The primary structure comprises 367 residues: Lipoyl synthase 2, chloroplastic (367 aa).

Positions 84, 89, 95, 121, 125, 128, and 336 each coordinate [4Fe-4S] cluster. In terms of domain architecture, Radical SAM core spans 104-325; that stretch reads GEGDGIATAT…KEYGESVGFR (222 aa).

The protein belongs to the radical SAM superfamily. Lipoyl synthase family. [4Fe-4S] cluster serves as cofactor.

The protein resides in the plastid. It localises to the chloroplast. It carries out the reaction [[Fe-S] cluster scaffold protein carrying a second [4Fe-4S](2+) cluster] + N(6)-octanoyl-L-lysyl-[protein] + 2 oxidized [2Fe-2S]-[ferredoxin] + 2 S-adenosyl-L-methionine + 4 H(+) = [[Fe-S] cluster scaffold protein] + N(6)-[(R)-dihydrolipoyl]-L-lysyl-[protein] + 4 Fe(3+) + 2 hydrogen sulfide + 2 5'-deoxyadenosine + 2 L-methionine + 2 reduced [2Fe-2S]-[ferredoxin]. Its pathway is protein modification; protein lipoylation via endogenous pathway; protein N(6)-(lipoyl)lysine from octanoyl-[acyl-carrier-protein]: step 2/2. In terms of biological role, catalyzes the radical-mediated insertion of two sulfur atoms into the C-6 and C-8 positions of the octanoyl moiety bound to the lipoyl domains of lipoate-dependent enzymes, thereby converting the octanoylated domains into lipoylated derivatives. The chain is Lipoyl synthase 2, chloroplastic from Zea mays (Maize).